The following is a 363-amino-acid chain: MNRSEALFYRYGIRPILFRLGRGDAETAHERTLHILALISRSRLLCKTIGYLTTIRDQRLQRTVCGIPFPNPVGLAAGMDKDGVAIPAWAALGFGFVEVGTVTHHPQPGNPRPRLFRLPEQEALINRMGFNNQGAASLARRLARLQPAPIPVGVSIGKSKITPLEQAIDDYRASFRQLFPYAAYIAINVSSPNTPGLRQLQDADQLRALLAALQHDNAELGRTDQRGPRPLLVKIAPDLSDTAIEEVLTVCADHGVAGIIATNTTISREGLTGVDPRLAAEAGGLSGRPLIARALHVVRLIARLTGNRLPIIGVGGIHTPDDGLRMLEAGASLIQIYTGLVYYGPLLPRRINRAILTHSKVQQ.

Residues 77–81 (AGMDK) and T101 contribute to the FMN site. A substrate-binding site is contributed by K81. Substrate is bound at residue 126 to 130 (NRMGF). The FMN site is built by S155 and N188. N188 lines the substrate pocket. The Nucleophile role is filled by S191. N193 is a substrate binding site. FMN is bound by residues K234 and T262. 263–264 (NT) contacts substrate. FMN contacts are provided by residues G287, G316, and 337 to 338 (YT).

It belongs to the dihydroorotate dehydrogenase family. Type 2 subfamily. Monomer. FMN is required as a cofactor.

The protein resides in the cell membrane. It catalyses the reaction (S)-dihydroorotate + a quinone = orotate + a quinol. It functions in the pathway pyrimidine metabolism; UMP biosynthesis via de novo pathway; orotate from (S)-dihydroorotate (quinone route): step 1/1. Catalyzes the conversion of dihydroorotate to orotate with quinone as electron acceptor. The protein is Dihydroorotate dehydrogenase (quinone) of Chloroflexus aurantiacus (strain ATCC 29366 / DSM 635 / J-10-fl).